A 99-amino-acid polypeptide reads, in one-letter code: Putative endopeptidase RzpR (99 aa).

This chain is Putative endopeptidase RzpR (rzpR), found in Escherichia coli (strain K12).